Reading from the N-terminus, the 802-residue chain is Oligophrenin-1 (802 aa).

The PH domain occupies glutamine 265–proline 368. The 185-residue stretch at methionine 380–tyrosine 564 folds into the Rho-GAP domain. Disordered regions lie at residues glutamine 641–glutamate 663 and threonine 682–serine 802. Residues histidine 716 to glycine 732 are compositionally biased toward basic and acidic residues. Residues serine 751–alanine 768 show a composition bias toward polar residues.

In terms of assembly, interacts with HOMER1. Interacts with AMPA receptor complexes. Interacts with SH3GL2 (endophilin-A1). Interacts (via C-terminus) with NR1D1. As to expression, high expression in brain, particularly in the cerebellum, hippocampus, thalamus, frontal lobes, sensory cortex. Found in the myelin sheaths of peripheral nerves, chromaffin cells within the adrenal medulla, and in extra-adrenal chromaffin cells associated with celiac ganglia.

It is found in the postsynapse. It localises to the presynapse. The protein resides in the cell projection. Its subcellular location is the axon. The protein localises to the dendritic spine. It is found in the dendrite. It localises to the cytoplasm. In terms of biological role, stimulates GTP hydrolysis of members of the Rho family. Its action on RHOA activity and signaling is implicated in growth and stabilization of dendritic spines, and therefore in synaptic function, in hippocampal neurons. Critical for the stabilization of AMPA receptors at postsynaptic sites. Critical for the regulation of synaptic vesicle endocytosis at pre-synaptic terminals. Required for the localization of NR1D1 to dendrites, can suppress its repressor activity and protect it from proteasomal degradation. The chain is Oligophrenin-1 (Ophn1) from Rattus norvegicus (Rat).